Reading from the N-terminus, the 481-residue chain is ATP synthase subunit beta (481 aa).

160–167 contributes to the ATP binding site; that stretch reads GGAGVGKT.

This sequence belongs to the ATPase alpha/beta chains family. In terms of assembly, F-type ATPases have 2 components, CF(1) - the catalytic core - and CF(0) - the membrane proton channel. CF(1) has five subunits: alpha(3), beta(3), gamma(1), delta(1), epsilon(1). CF(0) has three main subunits: a(1), b(2) and c(9-12). The alpha and beta chains form an alternating ring which encloses part of the gamma chain. CF(1) is attached to CF(0) by a central stalk formed by the gamma and epsilon chains, while a peripheral stalk is formed by the delta and b chains.

It is found in the cell inner membrane. It carries out the reaction ATP + H2O + 4 H(+)(in) = ADP + phosphate + 5 H(+)(out). Its function is as follows. Produces ATP from ADP in the presence of a proton gradient across the membrane. The catalytic sites are hosted primarily by the beta subunits. This chain is ATP synthase subunit beta, found in Stigmatella aurantiaca.